A 427-amino-acid chain; its full sequence is Enolase (427 aa).

Gln-163 is a (2R)-2-phosphoglycerate binding site. Glu-205 (proton donor) is an active-site residue. Residues Asp-242, Glu-285, and Asp-312 each coordinate Mg(2+). Positions 337, 366, 367, and 388 each coordinate (2R)-2-phosphoglycerate. Lys-337 serves as the catalytic Proton acceptor.

It belongs to the enolase family. The cofactor is Mg(2+).

The protein localises to the cytoplasm. Its subcellular location is the secreted. It is found in the cell surface. The catalysed reaction is (2R)-2-phosphoglycerate = phosphoenolpyruvate + H2O. The protein operates within carbohydrate degradation; glycolysis; pyruvate from D-glyceraldehyde 3-phosphate: step 4/5. Functionally, catalyzes the reversible conversion of 2-phosphoglycerate (2-PG) into phosphoenolpyruvate (PEP). It is essential for the degradation of carbohydrates via glycolysis. This Leptothrix cholodnii (strain ATCC 51168 / LMG 8142 / SP-6) (Leptothrix discophora (strain SP-6)) protein is Enolase.